A 190-amino-acid chain; its full sequence is Probable calcium-binding protein CML27 (190 aa).

3 EF-hand domains span residues Leu-27–Gly-62, Asp-115–Pro-150, and Arg-153–Trp-188. 14 residues coordinate Ca(2+): Asp-40, Asn-42, Asp-44, Glu-46, Glu-51, Asp-128, Asp-130, Asp-132, Glu-139, Asp-166, Asp-168, Asp-170, Arg-172, and Glu-177.

Its function is as follows. Potential calcium sensor. This Oryza sativa subsp. japonica (Rice) protein is Probable calcium-binding protein CML27 (CML27).